The following is a 338-amino-acid chain: MSLQHEKVTIAPLVLLSALDHYERTQTKENKRCVGVILGDANSSTIRVTNSFALPFEEDEKNSDVWFLDHNYIENMNEMCKKINAKEKLIGWYHSGPKLRASDLKINELFKKYTQNNPLLLIVDVKQQGVGLPTDAYVAIEQVKDDGTSTEKTFLHLPCTIEAEEAEEIGVEHLLRDVRDQAAGGLSIRLTNQLKSLKGLQSKLKDVVEYLDKVINKELPINHTILGKLQDVFNLLPNLGTPDDDEIDVENHDRINISNNLQKALTVKTNDELMVIYISNLVRSIIAFDDLIENKIQNKKIQEQRVKDKQSKVSDDSESESGDKEATAPLIQRKNKKN.

N-acetylserine is present on Ser2. In terms of domain architecture, MPN spans 8–143; that stretch reads VTIAPLVLLS…TDAYVAIEQV (136 aa). Basic and acidic residues predominate over residues 301 to 326; sequence IQEQRVKDKQSKVSDDSESESGDKEA. The disordered stretch occupies residues 301 to 338; it reads IQEQRVKDKQSKVSDDSESESGDKEATAPLIQRKNKKN. Phosphoserine occurs at positions 314, 317, and 319. The residue at position 327 (Thr327) is a Phosphothreonine.

Belongs to the peptidase M67A family. N-acetylated by NAT1.

In terms of biological role, acts as a regulatory subunit of the 26S proteasome which is involved in the ATP-dependent degradation of ubiquitinated proteins. In Saccharomyces cerevisiae (strain ATCC 204508 / S288c) (Baker's yeast), this protein is 26S proteasome regulatory subunit RPN8 (RPN8).